The chain runs to 176 residues: NAD(P)H-quinone oxidoreductase subunit I, chloroplastic (176 aa).

4Fe-4S ferredoxin-type domains lie at 55–84 (GRIH…VDWE) and 95–124 (LNYS…MTEE). The [4Fe-4S] cluster site is built by cysteine 64, cysteine 67, cysteine 70, cysteine 74, cysteine 104, cysteine 107, cysteine 110, and cysteine 114.

This sequence belongs to the complex I 23 kDa subunit family. In terms of assembly, NDH is composed of at least 16 different subunits, 5 of which are encoded in the nucleus. The cofactor is [4Fe-4S] cluster.

Its subcellular location is the plastid. It is found in the chloroplast thylakoid membrane. It catalyses the reaction a plastoquinone + NADH + (n+1) H(+)(in) = a plastoquinol + NAD(+) + n H(+)(out). The enzyme catalyses a plastoquinone + NADPH + (n+1) H(+)(in) = a plastoquinol + NADP(+) + n H(+)(out). NDH shuttles electrons from NAD(P)H:plastoquinone, via FMN and iron-sulfur (Fe-S) centers, to quinones in the photosynthetic chain and possibly in a chloroplast respiratory chain. The immediate electron acceptor for the enzyme in this species is believed to be plastoquinone. Couples the redox reaction to proton translocation, and thus conserves the redox energy in a proton gradient. In Populus trichocarpa (Western balsam poplar), this protein is NAD(P)H-quinone oxidoreductase subunit I, chloroplastic.